The primary structure comprises 135 residues: Transcription antitermination protein NusB (135 aa).

The protein belongs to the NusB family.

Involved in transcription antitermination. Required for transcription of ribosomal RNA (rRNA) genes. Binds specifically to the boxA antiterminator sequence of the ribosomal RNA (rrn) operons. This is Transcription antitermination protein NusB from Nocardioides sp. (strain ATCC BAA-499 / JS614).